Reading from the N-terminus, the 54-residue chain is UPF0391 membrane protein Tbd_2238 (54 aa).

Helical transmembrane passes span 5 to 25 and 28 to 48; these read ALVF…GIAA and VGIA…TFVV.

Belongs to the UPF0391 family.

Its subcellular location is the cell membrane. This chain is UPF0391 membrane protein Tbd_2238, found in Thiobacillus denitrificans (strain ATCC 25259 / T1).